We begin with the raw amino-acid sequence, 475 residues long: MAPLRPIFTLALLLWVVLADQESCKDRCTEGFNANRKCQCDELCSYYQSCCADYAAECKPQVTRGDVFTMPEDEYGPYDYIEQTKDNASVHAQPESPTVGQEPTLSPDLQTEGGAEPTHEVPLEPEMETLRPEGEDLQAGTTELGTSASPAEEELCSGKPFDAFTDLKNGSLFAFRGQYCYELDETAVRPGYPKLIQDVWGIEGPIDAAFTRINCQGKTYLFKGSQYWRFEDGILDPDYPRNISEGFSGIPDNVDAAFALPAHSYSGRERVYFFKGDKYWEYQFQQQPSQEECEGSSLSAVFEHFAMLHRDSWEDIFKLLFWGRPSGGARQPQFISRDWHGVPGKVDAAMAGRIYISGLTPSPSAKKQKSRRRSRKRYRSRYGRGRSQNSRRLSRSISRLWFSSEEVSLGPYNYEDYETSWLKPATSEPIQSVYFFSGDKYYRVNLRTQRVDTVNPPYPRSIAQYWLGCPAPGGQ.

The signal sequence occupies residues 1–19 (MAPLRPIFTLALLLWVVLA). The SMB domain maps to 20–63 (DQESCKDRCTEGFNANRKCQCDELCSYYQSCCADYAAECKPQVT). 7 disulfides stabilise this stretch: Cys24–Cys28, Cys24–Cys40, Cys28–Cys58, Cys38–Cys40, Cys38–Cys51, Cys44–Cys50, and Cys51–Cys58. The Cell attachment site signature appears at 64-66 (RGD). Thr69 is subject to Phosphothreonine. 3 positions are modified to sulfotyrosine: Tyr75, Tyr78, and Tyr80. The N-linked (GlcNAc...) asparagine glycan is linked to Asn87. Residues 87-123 (NASVHAQPESPTVGQEPTLSPDLQTEGGAEPTHEVPL) are disordered. Residues 95–109 (ESPTVGQEPTLSPDL) are compositionally biased toward polar residues. Hemopexin repeat units follow at residues 158–202 (GKPF…VWGI), 203–250 (EGPI…FSGI), and 251–305 (PDNV…FEHF). Residues Asn169 and Asn242 are each glycosylated (N-linked (GlcNAc...) asparagine). Sulfotyrosine occurs at positions 279 and 282. Position 312 is a phosphoserine (Ser312). Residues 359–391 (LTPSPSAKKQKSRRRSRKRYRSRYGRGRSQNSR) form a disordered region. Positions 366–384 (KKQKSRRRSRKRYRSRYGR) are enriched in basic residues. The interval 366 to 392 (KKQKSRRRSRKRYRSRYGRGRSQNSRR) is glycosaminoglycan binding region. Ser394 is subject to Phosphoserine. A Hemopexin 4 repeat occupies 419–469 (TSWLKPATSEPIQSVYFFSGDKYYRVNLRTQRVDTVNPPYPRSIAQYWLGC).

Interacts with SERPINE1/PAI1 and C1QBP. Monomer. Sulfated on tyrosine residues. Post-translationally, N- and O-glycosylated. In terms of processing, it has been suggested that the active SMB domain may be permitted considerable disulfide bond heterogeneity or variability, thus two alternate disulfide patterns based on 3D structures are described with 1 disulfide bond conserved in both. In terms of tissue distribution, plasma.

It is found in the secreted. It localises to the extracellular space. Its function is as follows. Vitronectin is a cell adhesion and spreading factor found in serum and tissues. Vitronectin interact with glycosaminoglycans and proteoglycans. Is recognized by certain members of the integrin family and serves as a cell-to-substrate adhesion molecule. Inhibitor of the membrane-damaging effect of the terminal cytolytic complement pathway. This chain is Vitronectin (VTN), found in Oryctolagus cuniculus (Rabbit).